Reading from the N-terminus, the 440-residue chain is Glutamate--tRNA ligase 2 (440 aa).

Residues 8–18 carry the 'HIGH' region motif; the sequence is PSPTGYLHVGN. Residues 239–243 carry the 'KMSKS' region motif; the sequence is ALSKR. Position 242 (Lys242) interacts with ATP.

This sequence belongs to the class-I aminoacyl-tRNA synthetase family. Glutamate--tRNA ligase type 1 subfamily. Monomer.

The protein resides in the cytoplasm. It carries out the reaction tRNA(Glu) + L-glutamate + ATP = L-glutamyl-tRNA(Glu) + AMP + diphosphate. Catalyzes the attachment of glutamate to tRNA(Glu) in a two-step reaction: glutamate is first activated by ATP to form Glu-AMP and then transferred to the acceptor end of tRNA(Glu). The protein is Glutamate--tRNA ligase 2 of Dinoroseobacter shibae (strain DSM 16493 / NCIMB 14021 / DFL 12).